The sequence spans 267 residues: O-methyltransferase (267 aa).

Residues Gln100 and His145 each contribute to the S-adenosyl-L-methionine site.

It belongs to the methyltransferase superfamily.

Its pathway is antifungal biosynthesis. Functionally, O-methyltransferase; part of the gene cluster that mediates the biosynthesis of the tetrahydropyranyl antifungal agent lanomycin that acts as an inhibitor of CYP51 and blocks the ergosterol biosynthesis. The biosynthesis probably begins with the formation of an hexaketide, followed by methionine mediated alkylation of C-2 and C-6, and methylation of the reduced C-3 oxygen, pyran forming reductive ring closure, oxygenation of C-4, beta-keto reduction, enoyl reduction and dehydration of the remaining oxygens, and finally, acylation with glycine to complete the biosynthesis. This Pyrenophora dematioidea (Helminthosporium dematioideum) protein is O-methyltransferase.